Here is a 94-residue protein sequence, read N- to C-terminus: Pyrimidine/purine nucleoside phosphorylase (94 aa).

This sequence belongs to the nucleoside phosphorylase PpnP family.

It catalyses the reaction a purine D-ribonucleoside + phosphate = a purine nucleobase + alpha-D-ribose 1-phosphate. The enzyme catalyses adenosine + phosphate = alpha-D-ribose 1-phosphate + adenine. The catalysed reaction is cytidine + phosphate = cytosine + alpha-D-ribose 1-phosphate. It carries out the reaction guanosine + phosphate = alpha-D-ribose 1-phosphate + guanine. It catalyses the reaction inosine + phosphate = alpha-D-ribose 1-phosphate + hypoxanthine. The enzyme catalyses thymidine + phosphate = 2-deoxy-alpha-D-ribose 1-phosphate + thymine. The catalysed reaction is uridine + phosphate = alpha-D-ribose 1-phosphate + uracil. It carries out the reaction xanthosine + phosphate = alpha-D-ribose 1-phosphate + xanthine. In terms of biological role, catalyzes the phosphorolysis of diverse nucleosides, yielding D-ribose 1-phosphate and the respective free bases. Can use uridine, adenosine, guanosine, cytidine, thymidine, inosine and xanthosine as substrates. Also catalyzes the reverse reactions. This chain is Pyrimidine/purine nucleoside phosphorylase, found in Alcanivorax borkumensis (strain ATCC 700651 / DSM 11573 / NCIMB 13689 / SK2).